The primary structure comprises 188 residues: Putative adenylate kinase (188 aa).

Positions 10, 12, 13, 14, and 15 each coordinate ATP. Positions 30–53 are NMP; sequence HVSSFLIQNKAFSEYDELRQSYVI. Positions 103 to 113 are LID; sequence RRGWGELKIAE. Residues Arg104 and Lys142 each coordinate ATP.

Belongs to the adenylate kinase family. AK6 subfamily. In terms of assembly, interacts with uS11. Not a structural component of 40S pre-ribosomes, but transiently interacts with them by binding to uS11.

The catalysed reaction is AMP + ATP = 2 ADP. The enzyme catalyses ATP + H2O = ADP + phosphate + H(+). Functionally, broad-specificity nucleoside monophosphate (NMP) kinase that catalyzes the reversible transfer of the terminal phosphate group between nucleoside triphosphates and monophosphates. Also has ATPase activity. Involved in the late maturation steps of the 30S ribosomal particles, specifically 16S rRNA maturation. While NMP activity is not required for ribosome maturation, ATPase activity is. Associates transiently with small ribosomal subunit protein uS11. ATP hydrolysis breaks the interaction with uS11. May temporarily remove uS11 from the ribosome to enable a conformational change of the ribosomal RNA that is needed for the final maturation step of the small ribosomal subunit. In Sulfurisphaera tokodaii (strain DSM 16993 / JCM 10545 / NBRC 100140 / 7) (Sulfolobus tokodaii), this protein is Putative adenylate kinase.